Reading from the N-terminus, the 161-residue chain is Putative TRAP transporter small permease protein HI_1030 (161 aa).

4 helical membrane passes run 13 to 33 (LEILCISILALMSILVFLNVV), 51 to 71 (YLFIWLAFLGAVLAFNENQHV), 86 to 106 (AILKFITDMMMLICCYLIIEG), and 135 to 155 (IAGILVSAILITRLISTIFFI).

Belongs to the TRAP transporter small permease family.

The protein resides in the cell inner membrane. In Haemophilus influenzae (strain ATCC 51907 / DSM 11121 / KW20 / Rd), this protein is Putative TRAP transporter small permease protein HI_1030.